We begin with the raw amino-acid sequence, 170 residues long: Ribosome maturation factor RimM (170 aa).

The 72-residue stretch at 92–163 (KEGWYYFELE…RMDVELPPGL (72 aa)) folds into the PRC barrel domain.

It belongs to the RimM family. Binds ribosomal protein uS19.

The protein localises to the cytoplasm. An accessory protein needed during the final step in the assembly of 30S ribosomal subunit, possibly for assembly of the head region. Essential for efficient processing of 16S rRNA. May be needed both before and after RbfA during the maturation of 16S rRNA. It has affinity for free ribosomal 30S subunits but not for 70S ribosomes. The protein is Ribosome maturation factor RimM of Desulfitobacterium hafniense (strain Y51).